The sequence spans 112 residues: UPF0102 protein Pmob_0702 (112 aa).

Belongs to the UPF0102 family.

This Petrotoga mobilis (strain DSM 10674 / SJ95) protein is UPF0102 protein Pmob_0702.